Consider the following 217-residue polypeptide: Probable septum site-determining protein MinC (217 aa).

The protein belongs to the MinC family. As to quaternary structure, interacts with MinD and FtsZ.

In terms of biological role, cell division inhibitor that blocks the formation of polar Z ring septums. Rapidly oscillates between the poles of the cell to destabilize FtsZ filaments that have formed before they mature into polar Z rings. Prevents FtsZ polymerization. The protein is Probable septum site-determining protein MinC of Pelotomaculum thermopropionicum (strain DSM 13744 / JCM 10971 / SI).